A 482-amino-acid chain; its full sequence is Glutamyl-tRNA(Gln) amidotransferase subunit A (482 aa).

Catalysis depends on charge relay system residues Lys-74 and Ser-149. Residue Ser-173 is the Acyl-ester intermediate of the active site.

Belongs to the amidase family. GatA subfamily. As to quaternary structure, heterotrimer of A, B and C subunits.

The enzyme catalyses L-glutamyl-tRNA(Gln) + L-glutamine + ATP + H2O = L-glutaminyl-tRNA(Gln) + L-glutamate + ADP + phosphate + H(+). In terms of biological role, allows the formation of correctly charged Gln-tRNA(Gln) through the transamidation of misacylated Glu-tRNA(Gln) in organisms which lack glutaminyl-tRNA synthetase. The reaction takes place in the presence of glutamine and ATP through an activated gamma-phospho-Glu-tRNA(Gln). The polypeptide is Glutamyl-tRNA(Gln) amidotransferase subunit A (Prochlorococcus marinus (strain AS9601)).